The chain runs to 396 residues: NADH-quinone oxidoreductase subunit D (396 aa).

Belongs to the complex I 49 kDa subunit family. NDH-1 is composed of 14 different subunits. Subunits NuoB, C, D, E, F, and G constitute the peripheral sector of the complex.

Its subcellular location is the cell inner membrane. The catalysed reaction is a quinone + NADH + 5 H(+)(in) = a quinol + NAD(+) + 4 H(+)(out). In terms of biological role, NDH-1 shuttles electrons from NADH, via FMN and iron-sulfur (Fe-S) centers, to quinones in the respiratory chain. The immediate electron acceptor for the enzyme in this species is believed to be ubiquinone. Couples the redox reaction to proton translocation (for every two electrons transferred, four hydrogen ions are translocated across the cytoplasmic membrane), and thus conserves the redox energy in a proton gradient. The sequence is that of NADH-quinone oxidoreductase subunit D from Bartonella bacilliformis (strain ATCC 35685 / KC583 / Herrer 020/F12,63).